Here is a 212-residue protein sequence, read N- to C-terminus: Thymidylate kinase (212 aa).

10–17 (GLEGAGKT) contacts ATP.

This sequence belongs to the thymidylate kinase family.

The enzyme catalyses dTMP + ATP = dTDP + ADP. Functionally, phosphorylation of dTMP to form dTDP in both de novo and salvage pathways of dTTP synthesis. In Serratia proteamaculans (strain 568), this protein is Thymidylate kinase.